The primary structure comprises 140 residues: Small ribosomal subunit protein uS19 (140 aa).

The tract at residues 43–71 (IERGLTTEQQKLRETVRDADPQKTANDPI) is disordered. Residues 52 to 63 (QKLRETVRDADP) show a composition bias toward basic and acidic residues.

Belongs to the universal ribosomal protein uS19 family.

Protein S19 forms a complex with S13 that binds strongly to the 16S ribosomal RNA. The polypeptide is Small ribosomal subunit protein uS19 (Haloquadratum walsbyi (strain DSM 16790 / HBSQ001)).